The following is a 155-amino-acid chain: Gas vesicle protein K (155 aa).

Belongs to the gas vesicle GvpK family.

Its subcellular location is the gas vesicle. In terms of biological role, might be involved in nucleating gas vesicle formation. Gas vesicles (GV) are hollow, gas filled proteinaceous nanostructures. During planktonic growth they allow positioning of the organism at a favorable depth for light or nutrient acquisition. The chain is Gas vesicle protein K from Dolichospermum flosaquae (Anabaena flos-aquae).